A 36-amino-acid chain; its full sequence is Dermonecrotic toxin LgSicTox-beta-LOXN2 (36 aa).

This sequence belongs to the arthropod phospholipase D family. Class II subfamily. Mg(2+) serves as cofactor. Contains 2 disulfide bonds. As to expression, expressed by the venom gland.

Its subcellular location is the secreted. It carries out the reaction an N-(acyl)-sphingosylphosphocholine = an N-(acyl)-sphingosyl-1,3-cyclic phosphate + choline. The enzyme catalyses an N-(acyl)-sphingosylphosphoethanolamine = an N-(acyl)-sphingosyl-1,3-cyclic phosphate + ethanolamine. The catalysed reaction is a 1-acyl-sn-glycero-3-phosphocholine = a 1-acyl-sn-glycero-2,3-cyclic phosphate + choline. It catalyses the reaction a 1-acyl-sn-glycero-3-phosphoethanolamine = a 1-acyl-sn-glycero-2,3-cyclic phosphate + ethanolamine. In terms of biological role, dermonecrotic toxins cleave the phosphodiester linkage between the phosphate and headgroup of certain phospholipids (sphingolipid and lysolipid substrates), forming an alcohol (often choline) and a cyclic phosphate. This toxin acts on sphingomyelin (SM). It may also act on ceramide phosphoethanolamine (CPE), lysophosphatidylcholine (LPC) and lysophosphatidylethanolamine (LPE), but not on lysophosphatidylserine (LPS), and lysophosphatidylglycerol (LPG). It acts by transphosphatidylation, releasing exclusively cyclic phosphate products as second products. Induces dermonecrosis, hemolysis, increased vascular permeability, edema, inflammatory response, and platelet aggregation. This chain is Dermonecrotic toxin LgSicTox-beta-LOXN2, found in Loxosceles gaucho (Spider).